Here is a 311-residue protein sequence, read N- to C-terminus: DNA replication terminus site-binding protein (311 aa).

It belongs to the Tus family.

The protein localises to the cytoplasm. In terms of biological role, trans-acting protein required for termination of DNA replication. Binds to DNA replication terminator sequences (terA to terF) to prevent the passage of replication forks. The termination efficiency will be affected by the affinity of this protein for the terminator sequence. This chain is DNA replication terminus site-binding protein, found in Yersinia pseudotuberculosis serotype O:1b (strain IP 31758).